The chain runs to 446 residues: Tubulin beta chain (446 aa).

GTP is bound by residues Q11, E69, S138, G142, T143, G144, N204, and N226. E69 serves as a coordination point for Mg(2+). The interval 427 to 446 is disordered; it reads EAGVDEGEEFEEEEDFGDEQ. Over residues 429 to 446 the composition is skewed to acidic residues; it reads GVDEGEEFEEEEDFGDEQ.

It belongs to the tubulin family. In terms of assembly, dimer of alpha and beta chains. A typical microtubule is a hollow water-filled tube with an outer diameter of 25 nm and an inner diameter of 15 nM. Alpha-beta heterodimers associate head-to-tail to form protofilaments running lengthwise along the microtubule wall with the beta-tubulin subunit facing the microtubule plus end conferring a structural polarity. Microtubules usually have 13 protofilaments but different protofilament numbers can be found in some organisms and specialized cells. Requires Mg(2+) as cofactor.

Its subcellular location is the cytoplasm. The protein resides in the cytoskeleton. Functionally, tubulin is the major constituent of microtubules, a cylinder consisting of laterally associated linear protofilaments composed of alpha- and beta-tubulin heterodimers. Microtubules grow by the addition of GTP-tubulin dimers to the microtubule end, where a stabilizing cap forms. Below the cap, tubulin dimers are in GDP-bound state, owing to GTPase activity of alpha-tubulin. This is Tubulin beta chain from Giardia intestinalis (Giardia lamblia).